A 317-amino-acid chain; its full sequence is Olfactory receptor-like protein OLF3 (317 aa).

Residues 1–25 (MGTGNQTWVREFVLLGLSSDWDTEV) are Extracellular-facing. N-linked (GlcNAc...) asparagine glycosylation occurs at asparagine 5. Residues 26–49 (SLFVLFLITYMVTVLGNFLIILLI) traverse the membrane as a helical segment. Residues 50–57 (RLDSRLHT) are Cytoplasmic-facing. A helical membrane pass occupies residues 58–79 (PMYFFLTNLSLVDVSYATSIIP). The Extracellular portion of the chain corresponds to 80-100 (QMLAHLLAAHKAIPFVSCAAQ). Residues 101-120 (LFFSLGLGGIEFVLLAVMAY) traverse the membrane as a helical segment. The Cytoplasmic portion of the chain corresponds to 121-139 (DRYVAVCDPLRYSVIMHGG). Residues 140–158 (LCTRLAITSWVSGSMNSLM) form a helical membrane-spanning segment. Topologically, residues 159 to 196 (QTVITFQLPMCTNKYIDHISCELLAVVRLACVDTSSNE) are extracellular. A helical membrane pass occupies residues 197 to 219 (IAIMVSSIVLLMTPFCLVLLSYI). Residues 220–236 (QIISTILKIQSTEGRKK) lie on the Cytoplasmic side of the membrane. A helical membrane pass occupies residues 237–260 (AFHTCASHLTVVVLCYGMAIFTYI). Residues 261 to 272 (QPRSSPSVLQEK) lie on the Extracellular side of the membrane. Residues 273-292 (LISLFYSVLTPMLNPMIYSV) traverse the membrane as a helical segment. The Cytoplasmic portion of the chain corresponds to 293-317 (RNKEVKGAWQKLLGQLTGITSKLAT).

The protein belongs to the G-protein coupled receptor 1 family.

It is found in the cell membrane. In terms of biological role, putative odorant or sperm cell receptor. The polypeptide is Olfactory receptor-like protein OLF3 (Canis lupus familiaris (Dog)).